Consider the following 501-residue polypeptide: Fumarate reductase 2 (501 aa).

The N-terminal 32 residues, 1–32 (MIRSVRRVFIYVSIFVLIIVLKRTLSGTDQTS), are a transit peptide targeting the mitochondrion. Residue 37 to 51 (VVVIGSGLAGLTTSN) coordinates FAD. Catalysis depends on residues H281 and R304.

It belongs to the FAD-dependent oxidoreductase 2 family. FRD/SDH subfamily. Requires FAD as cofactor.

Its subcellular location is the mitochondrion. It carries out the reaction succinate + NAD(+) = fumarate + NADH + H(+). Irreversibly catalyzes the reduction of fumarate to succinate. Together with the second isozyme of soluble fumarate reductase (FRD1), essential for anaerobic growth. Involved in maintaining redox balance during oxygen deficiency conditions. Reduction of fumarate is the main source of succinate during fermentation, and under anaerobic conditions, the formation of succinate is strictly required for the reoxidation of FADH(2). This is Fumarate reductase 2 (OSM1) from Saccharomyces cerevisiae (strain ATCC 204508 / S288c) (Baker's yeast).